Reading from the N-terminus, the 36-residue chain is MQPSTATAAPKEKTSSEKKDNYIIKGVFWDPACVIA.

Positions 1–21 (MQPSTATAAPKEKTSSEKKDN) are excised as a propeptide. Residue cysteine 33 is modified to Cysteine methyl ester. Cysteine 33 is lipidated: S-farnesyl cysteine. A propeptide spans 34–36 (VIA) (removed in mature form).

Its subcellular location is the cell membrane. Its function is as follows. The active factor is excreted into the culture medium by haploid cells of the A mating type and acts on cells of the opposite mating type (type alpha). It mediates the conjugation process between the two types by inhibiting the initiation of DNA synthesis in type alpha cells and synchronizing them with type A. This Saccharomyces cerevisiae (strain ATCC 204508 / S288c) (Baker's yeast) protein is Mating hormone A-factor 1 (MFA1).